Here is a 398-residue protein sequence, read N- to C-terminus: Histidinol-phosphate aminotransferase (398 aa).

Positions 1–10 (MTGQRATPQP) are enriched in polar residues. A disordered region spans residues 1–30 (MTGQRATPQPTLDDLPLRDDLRGKSPYGAP). K234 carries the post-translational modification N6-(pyridoxal phosphate)lysine.

It belongs to the class-II pyridoxal-phosphate-dependent aminotransferase family. Histidinol-phosphate aminotransferase subfamily. Homodimer. Requires pyridoxal 5'-phosphate as cofactor.

It catalyses the reaction L-histidinol phosphate + 2-oxoglutarate = 3-(imidazol-4-yl)-2-oxopropyl phosphate + L-glutamate. The protein operates within amino-acid biosynthesis; L-histidine biosynthesis; L-histidine from 5-phospho-alpha-D-ribose 1-diphosphate: step 7/9. This Mycobacterium avium (strain 104) protein is Histidinol-phosphate aminotransferase.